We begin with the raw amino-acid sequence, 660 residues long: tRNA 5-methylaminomethyl-2-thiouridine biosynthesis bifunctional protein MnmC (660 aa).

The tract at residues 1-235 (MTITRHARID…KWEVLRGTFI (235 aa)) is tRNA (mnm(5)s(2)U34)-methyltransferase. An FAD-dependent cmnm(5)s(2)U34 oxidoreductase region spans residues 266 to 660 (IGAGLAGCAT…LRGLIRGGGK (395 aa)).

In the N-terminal section; belongs to the methyltransferase superfamily. tRNA (mnm(5)s(2)U34)-methyltransferase family. This sequence in the C-terminal section; belongs to the DAO family. FAD is required as a cofactor.

It is found in the cytoplasm. The catalysed reaction is 5-aminomethyl-2-thiouridine(34) in tRNA + S-adenosyl-L-methionine = 5-methylaminomethyl-2-thiouridine(34) in tRNA + S-adenosyl-L-homocysteine + H(+). Its function is as follows. Catalyzes the last two steps in the biosynthesis of 5-methylaminomethyl-2-thiouridine (mnm(5)s(2)U) at the wobble position (U34) in tRNA. Catalyzes the FAD-dependent demodification of cmnm(5)s(2)U34 to nm(5)s(2)U34, followed by the transfer of a methyl group from S-adenosyl-L-methionine to nm(5)s(2)U34, to form mnm(5)s(2)U34. This is tRNA 5-methylaminomethyl-2-thiouridine biosynthesis bifunctional protein MnmC from Pseudomonas savastanoi pv. phaseolicola (strain 1448A / Race 6) (Pseudomonas syringae pv. phaseolicola (strain 1448A / Race 6)).